Reading from the N-terminus, the 353-residue chain is S-adenosylmethionine:tRNA ribosyltransferase-isomerase (353 aa).

It belongs to the QueA family. In terms of assembly, monomer.

The protein localises to the cytoplasm. The enzyme catalyses 7-aminomethyl-7-carbaguanosine(34) in tRNA + S-adenosyl-L-methionine = epoxyqueuosine(34) in tRNA + adenine + L-methionine + 2 H(+). Its pathway is tRNA modification; tRNA-queuosine biosynthesis. Its function is as follows. Transfers and isomerizes the ribose moiety from AdoMet to the 7-aminomethyl group of 7-deazaguanine (preQ1-tRNA) to give epoxyqueuosine (oQ-tRNA). The chain is S-adenosylmethionine:tRNA ribosyltransferase-isomerase from Maricaulis maris (strain MCS10) (Caulobacter maris).